The following is a 281-amino-acid chain: 2-dehydro-3-deoxyphosphooctonate aldolase (281 aa).

This sequence belongs to the KdsA family.

It localises to the cytoplasm. It catalyses the reaction D-arabinose 5-phosphate + phosphoenolpyruvate + H2O = 3-deoxy-alpha-D-manno-2-octulosonate-8-phosphate + phosphate. The protein operates within carbohydrate biosynthesis; 3-deoxy-D-manno-octulosonate biosynthesis; 3-deoxy-D-manno-octulosonate from D-ribulose 5-phosphate: step 2/3. Its pathway is bacterial outer membrane biogenesis; lipopolysaccharide biosynthesis. This is 2-dehydro-3-deoxyphosphooctonate aldolase from Pseudomonas fluorescens (strain SBW25).